A 266-amino-acid polypeptide reads, in one-letter code: Aquaporin TIP3-2 (266 aa).

The next 2 helical transmembrane spans lie at 29–49 (AAIS…GSVL) and 66–86 (GLVA…AVAV). An NPA 1 motif is present at residues 94–96 (NPA). A run of 3 helical transmembrane segments spans residues 109-129 (LVRA…ATLL), 153-173 (AVLL…ATVV), and 180-200 (LGTI…LAGG). The NPA 2 signature appears at 208–210 (NPA). Residues 228–248 (YWLGPFLGAGLAGLVYEYLLI) form a helical membrane-spanning segment.

The protein belongs to the MIP/aquaporin (TC 1.A.8) family. TIP (TC 1.A.8.10) subfamily.

It localises to the vacuole membrane. In terms of biological role, aquaporins facilitate the transport of water and small neutral solutes across cell membranes. This chain is Aquaporin TIP3-2 (TIP3-2), found in Zea mays (Maize).